Reading from the N-terminus, the 448-residue chain is Ribosomal protein uS12 methylthiotransferase RimO (448 aa).

The 111-residue stretch at 16 to 126 folds into the MTTase N-terminal domain; it reads PKISFVSLGC…VVAAVHEAVP (111 aa). Residues C25, C61, C90, C157, C161, and C164 each coordinate [4Fe-4S] cluster. Positions 143-380 constitute a Radical SAM core domain; sequence LTPRHYAYLK…METQNGIALR (238 aa). One can recognise a TRAM domain in the interval 383 to 448; sequence RAKVGKRLPV…EAYDLYGSVA (66 aa).

The protein belongs to the methylthiotransferase family. RimO subfamily. It depends on [4Fe-4S] cluster as a cofactor.

It localises to the cytoplasm. It catalyses the reaction L-aspartate(89)-[ribosomal protein uS12]-hydrogen + (sulfur carrier)-SH + AH2 + 2 S-adenosyl-L-methionine = 3-methylsulfanyl-L-aspartate(89)-[ribosomal protein uS12]-hydrogen + (sulfur carrier)-H + 5'-deoxyadenosine + L-methionine + A + S-adenosyl-L-homocysteine + 2 H(+). Catalyzes the methylthiolation of an aspartic acid residue of ribosomal protein uS12. The protein is Ribosomal protein uS12 methylthiotransferase RimO of Methylobacterium radiotolerans (strain ATCC 27329 / DSM 1819 / JCM 2831 / NBRC 15690 / NCIMB 10815 / 0-1).